We begin with the raw amino-acid sequence, 1189 residues long: Nucleolar protein NET1 (1189 aa).

Serine 60 and serine 166 each carry phosphoserine. 2 disordered regions span residues 160 to 260 (SKLN…ISSG) and 345 to 1189 (TAQD…FKKK). Residues 166 to 180 (SPQSVQPQQQIPSSS) show a composition bias toward low complexity. A compositionally biased stretch (polar residues) spans 200–210 (IRSATNGSMRV). Phosphoserine is present on residues serine 231 and serine 252. Residues 244-253 (LPPPTQPQSP) are compositionally biased toward pro residues. The span at 368-381 (PEPRISEIEKELKE) shows a compositional bias: basic and acidic residues. Positions 391–407 (PAKAAKIPMKKPYLENG) are enriched in low complexity. Over residues 432–450 (ASLQRSQSSIADNNGSPVK) the composition is skewed to polar residues. Serine 437, serine 439, serine 447, and serine 452 each carry phosphoserine. The segment covering 470 to 486 (ASNTSITKSSNGESWGK) has biased composition (polar residues). Serine 497 bears the Phosphoserine mark. The span at 526–543 (NQVREKEDTNDKLLEKEI) shows a compositional bias: basic and acidic residues. Residues 590-601 (IEDDGNDNDEVD) show a composition bias toward acidic residues. Residues 641 to 657 (SRTSGNSKNSKPYTTVL) are compositionally biased toward polar residues. Over residues 659 to 668 (KDIDNSKPDP) the composition is skewed to basic and acidic residues. A Phosphothreonine modification is found at threonine 676. A compositionally biased stretch (low complexity) spans 682–691 (KRAAQLLAGA). Residues 692 to 702 (KKNEVPQKSTE) are compositionally biased toward basic and acidic residues. Residues 710–725 (TDDESESGIETDFSSD) are compositionally biased toward acidic residues. Over residues 756–777 (KDSKIINKEVDEERNDKRDSQK) the composition is skewed to basic and acidic residues. The segment covering 778 to 792 (KSAVSESSVTNSKIS) has biased composition (polar residues). Residues 806–815 (KQNEATKVET) are compositionally biased toward basic and acidic residues. Low complexity predominate over residues 822-833 (SSFPVVGGSPSV). At serine 830 the chain carries Phosphoserine. Basic and acidic residues-rich tracts occupy residues 884 to 897 (DLNK…EPEK), 905 to 919 (ANDK…DSKS), and 945 to 954 (ANDKLKDLKA). Residues 969 to 999 (SNEKNNSSANDDDSSSSGSSTEDESSSSSSS) are compositionally biased toward low complexity. The span at 1023–1039 (RSSSKIEAPSPSVNKKI) shows a compositional bias: polar residues. Position 1042 is a phosphothreonine (threonine 1042). The span at 1055-1070 (SSPPSVKSKTTSNPSS) shows a compositional bias: low complexity. 2 positions are modified to phosphoserine: serine 1056 and serine 1059. Residues 1095-1109 (PDVKEKTSKSNEKSQ) show a composition bias toward basic and acidic residues. Low complexity-rich tracts occupy residues 1123 to 1137 (DSDS…SDSS) and 1158 to 1169 (SFISAKSASAAL).

This sequence to yeast YKR010c. Component of the RENT complex which is composed of at least NET1, CDC14 and SIR2. Interacts with NSI1. Phosphorylated by CDC5.

It is found in the nucleus. The protein localises to the nucleolus. In terms of biological role, has a role in chromosome maintenance and is involved in mitotic exit. Inhibits the action of CDC14 by sequestering it in the nucleolus. Also binds to RNA polymerase I and stimulates rRNA synthesis. Influences RDNA chromatin by tethering SIR2 to rDNA in the nucleolus. This chain is Nucleolar protein NET1 (NET1), found in Saccharomyces cerevisiae (strain ATCC 204508 / S288c) (Baker's yeast).